A 57-amino-acid polypeptide reads, in one-letter code: uncharacterized protein (57 aa).

This is an uncharacterized protein from Methanocaldococcus jannaschii (strain ATCC 43067 / DSM 2661 / JAL-1 / JCM 10045 / NBRC 100440) (Methanococcus jannaschii).